A 302-amino-acid chain; its full sequence is NmrA-like family domain-containing protein DDB_G0286605 (302 aa).

NADP(+) is bound by residues 9 to 14 (GGTGYQ), 35 to 39 (RNPES), 56 to 57 (DE), 78 to 80 (TNS), K130, and 157 to 160 (YFQN).

The protein belongs to the NmrA-type oxidoreductase family.

Its function is as follows. May be a redox sensor protein. The polypeptide is NmrA-like family domain-containing protein DDB_G0286605 (Dictyostelium discoideum (Social amoeba)).